Consider the following 196-residue polypeptide: DnaA initiator-associating protein DiaA (196 aa).

Residues 34-196 (LVQSLLNGNK…DNTLFPHQDD (163 aa)) enclose the SIS domain.

This sequence belongs to the SIS family. DiaA subfamily. In terms of assembly, homotetramer; dimer of dimers.

Required for the timely initiation of chromosomal replication via direct interactions with the DnaA initiator protein. This chain is DnaA initiator-associating protein DiaA, found in Klebsiella pneumoniae (strain 342).